Reading from the N-terminus, the 434-residue chain is Sensor histidine kinase Hik2 (434 aa).

The 137-residue stretch at 16-152 (ISLCQSQVRL…EAIAKSLAVA (137 aa)) folds into the GAF domain. C19 lines the [3Fe-4S] cluster pocket. Residues 182–432 (DLLHQLRNPL…TFTLWLRSGE (251 aa)) enclose the Histidine kinase domain. H185 bears the Phosphohistidine; by autocatalysis mark. The short motif at 357–361 (DTGYG) is the G1 box element. The G2 box motif lies at 386–390 (GTGLG).

This sequence belongs to the chloroplast sensor kinase protein family. As to quaternary structure, exists as monomers, tetramers, hexamers and other higher-order oligomers; all are able to autophosphorylate. Upon treatment with 0.5 M NaCl only tetramers are seen, which are probably inactive. Interacts with both RppA and Rre1. [3Fe-4S] cluster is required as a cofactor. Autophosphorylates, probably on His-185.

It localises to the cytoplasm. The enzyme catalyses ATP + protein L-histidine = ADP + protein N-phospho-L-histidine.. With respect to regulation, autophosphorylation is inhibited by Na(+) but not by Cl(-). Reducing agents dithionite, duroquinol and decyl-plastoquinone, but not NADPH or ferredoxin inhibit autophosphorylation. Oxidation of the Fe-S cluster (with potassium ferricyanide) induces a conformational change that is conducive to its autophosphorylation activity. Member of possibly 2 two-component regulatory system(s) Hik2/Rre1 and Hik2/RppA. Transduces PQ (plastoquinone) redox signals to photosystem gene expression machinery during the adjustment of photosystem stoichiometry. Reduced PQ suppresses its autophosphorylation activity (i.e. kinase activity is higher under oxidizing conditions). Member of two-component regulatory system Hik2/Rre1, controls expression of sigB (sll0306), sll0528, slr1119, slr0852 and ssr3188 in response to hyperosmotic stress. Activity responds to high salt (with a linear response as concentrations rise to 0.5 M NaCl); detects Cl(-) levels. Autophosphorylates and transfers phosphate to Rre1. May transfer phosphate to RppA in a possible Hik2/RppA two-component system. The polypeptide is Sensor histidine kinase Hik2 (Synechocystis sp. (strain ATCC 27184 / PCC 6803 / Kazusa)).